We begin with the raw amino-acid sequence, 473 residues long: Photosystem II CP43 reaction center protein (473 aa).

Residues 1-14 (MKTLYSPRRFYPVE) constitute a propeptide that is removed on maturation. Threonine 15 is modified (N-acetylthreonine). At threonine 15 the chain carries Phosphothreonine. A run of 5 helical transmembrane segments spans residues 69–93 (LFEVAHFVPEKPMYEQGLILLPHLA), 134–155 (LLGPETLEESFPFFGYVWKDRN), 178–200 (KALYFGGVYDTWAPGGGDVRKIS), 255–275 (KPFAWARRALVWSGEAYLSYS), and 291–312 (WFNNTAYPSEFYGPTGPEASQA). Glutamate 367 contributes to the [CaMn4O5] cluster binding site. Residues 447–471 (RARAAAAGFEKGIDRDLEPVLFMTP) traverse the membrane as a helical segment.

It belongs to the PsbB/PsbC family. PsbC subfamily. As to quaternary structure, PSII is composed of 1 copy each of membrane proteins PsbA, PsbB, PsbC, PsbD, PsbE, PsbF, PsbH, PsbI, PsbJ, PsbK, PsbL, PsbM, PsbT, PsbX, PsbY, PsbZ, Psb30/Ycf12, at least 3 peripheral proteins of the oxygen-evolving complex and a large number of cofactors. It forms dimeric complexes. It depends on Binds multiple chlorophylls and provides some of the ligands for the Ca-4Mn-5O cluster of the oxygen-evolving complex. It may also provide a ligand for a Cl- that is required for oxygen evolution. PSII binds additional chlorophylls, carotenoids and specific lipids. as a cofactor.

Its subcellular location is the plastid. It is found in the chloroplast thylakoid membrane. In terms of biological role, one of the components of the core complex of photosystem II (PSII). It binds chlorophyll and helps catalyze the primary light-induced photochemical processes of PSII. PSII is a light-driven water:plastoquinone oxidoreductase, using light energy to abstract electrons from H(2)O, generating O(2) and a proton gradient subsequently used for ATP formation. The protein is Photosystem II CP43 reaction center protein of Ranunculus macranthus (Large buttercup).